The chain runs to 164 residues: Transcription antitermination protein NusB (164 aa).

Residues 144–164 are disordered; that stretch reads KNGRGLIDHTPPRAAKTDAKS. Positions 149–164 are enriched in basic and acidic residues; the sequence is LIDHTPPRAAKTDAKS.

Belongs to the NusB family.

Its function is as follows. Involved in transcription antitermination. Required for transcription of ribosomal RNA (rRNA) genes. Binds specifically to the boxA antiterminator sequence of the ribosomal RNA (rrn) operons. This is Transcription antitermination protein NusB from Chlorobium phaeovibrioides (strain DSM 265 / 1930) (Prosthecochloris vibrioformis (strain DSM 265)).